The chain runs to 389 residues: Protein Wnt-10b (389 aa).

The signal sequence occupies residues 1 to 28; sequence MLEEPRPRPPPSGLAGLLFLALCSRALS. Residue threonine 46 is modified to Phosphothreonine. 11 disulfide bridges follow: cysteine 83/cysteine 94, cysteine 136/cysteine 144, cysteine 146/cysteine 199, cysteine 247/cysteine 261, cysteine 249/cysteine 256, cysteine 318/cysteine 349, cysteine 334/cysteine 344, cysteine 348/cysteine 388, cysteine 364/cysteine 379, cysteine 366/cysteine 376, and cysteine 371/cysteine 372. N-linked (GlcNAc...) asparagine glycosylation is present at asparagine 93. Residues 171 to 197 form a disordered region; it reads KSFPHSLPSPGPGSSPSPGPQDTWEWG. The segment covering 177–189 has biased composition (pro residues); that stretch reads LPSPGPGSSPSPG. The O-palmitoleoyl serine; by PORCN moiety is linked to residue serine 253. Residue asparagine 335 is glycosylated (N-linked (GlcNAc...) asparagine).

Belongs to the Wnt family. As to quaternary structure, forms a soluble 1:1 complex with AFM; this prevents oligomerization and is required for prolonged biological activity. The complex with AFM may represent the physiological form in body fluids. Post-translationally, palmitoleoylation is required for efficient binding to frizzled receptors. Depalmitoleoylation leads to Wnt signaling pathway inhibition. In terms of tissue distribution, detected in most adult tissues. Highest levels were found in heart and skeletal muscle. Low levels are found in brain.

Its subcellular location is the secreted. The protein resides in the extracellular space. The protein localises to the extracellular matrix. Functionally, member of the Wnt ligand gene family that encodes for secreted proteins, which activate the Wnt signaling cascade. Specifically activates canonical Wnt/beta-catenin signaling and thus triggers beta-catenin/LEF/TCF-mediated transcriptional programs. Involved in signaling networks controlling stemness, pluripotency and cell fate decisions. Acts in the immune system, mammary gland, adipose tissue, bone and skin. This chain is Protein Wnt-10b (WNT10B), found in Homo sapiens (Human).